A 315-amino-acid polypeptide reads, in one-letter code: MASFASLVKKELTQLEVHPEHAKAELSALIRMNGSLTLMAHRFVLNIQTENPAIARRIYSLIRQVYHHEANLVVHRKMKLKKNYQYIVRLTEGVNDILSDLSILDPDTMAISTTVPASVLKEPQRMRSYLRGAFLASGSVNNPETSRYHLEIYSLYDNHNAGILKMMNHFNLNARTVERRSGYIVYLKEAEKIADFLQVIGATNAMLKFEDVRIMRDMRNSVNRLVNCENANMNKTIDAAQKQIENINYLKNHVGLDNLPAKLREIAVLRLAHPDVSLQELGAMMPSGQISKSGVNHRLRKLNQIAEGYQQPEDA.

The H-T-H motif DNA-binding region spans 277–311 (SLQELGAMMPSGQISKSGVNHRLRKLNQIAEGYQQ).

The protein belongs to the WhiA family.

Its function is as follows. Involved in cell division and chromosome segregation. This Lacticaseibacillus paracasei (strain ATCC 334 / BCRC 17002 / CCUG 31169 / CIP 107868 / KCTC 3260 / NRRL B-441) (Lactobacillus paracasei) protein is Probable cell division protein WhiA.